A 631-amino-acid chain; its full sequence is MAPPGSSTVFLLALTIIASTWALTPTHYLTKHDVERLKASLDRPFTNLESAFYSIVGLSSLGAQVPDAKKACTYIRSNLDPSNVDSLFYAAQASQALSGCEISISNETKDLLLAAVSEDSSVTQIYHAVAALSGFGLPLASQEALSALTARLSKEETVLATVQALQTASHLSQQADLRSIVEEIEDLVARLDELGGVYLQFEEGLETTALFVAATYKLMDHVGTEPSIKEDQVIQLMNAIFSKKNFESLSEAFSVASAAAVLSHNRYHVPVVVVPEGSASDTHEQAILRLQVTNVLSQPLTQATVKLEHAKSVASRATVLQKTSFTPVGDVFELNFMNVKFSSGYYDFLVEVEGDNRYIANTVELRVKISTEVGITNVDLSTVDKDQSIAPKTTRVTYPAKAKGTFIADSHQNFALFFQLVDVNTGAELTPHQTFVRLHNQKTGQEVVFVAEPDNKNVYKFELDTSERKIEFDSASGTYTLYLIIGDATLKNPILWNVADVVIKFPEEEAPSTVLSQNLFTPKQEIQHLFREPEKRPPTVVSNTFTALILSPLLLLFALWIRIGANVSNFTFAPSTIIFHLGHAAMLGLMYVYWTQLNMFQTLKYLAILGSVTFLAGNRMLAQQAVKRTAH.

Positions 1–22 are cleaved as a signal peptide; that stretch reads MAPPGSSTVFLLALTIIASTWA. The Lumenal segment spans residues 23–540; that stretch reads LTPTHYLTKH…REPEKRPPTV (518 aa). Asn-106 carries an N-linked (GlcNAc...) asparagine glycan. Lys-154 is covalently cross-linked (Glycyl lysine isopeptide (Lys-Gly) (interchain with G-Cter in ubiquitin)). The chain crosses the membrane as a helical span at residues 541–561; that stretch reads VSNTFTALILSPLLLLFALWI. The Cytoplasmic segment spans residues 562 to 571; that stretch reads RIGANVSNFT. Residues 572–592 form a helical membrane-spanning segment; the sequence is FAPSTIIFHLGHAAMLGLMYV. Over 593-596 the chain is Lumenal; that stretch reads YWTQ. A helical membrane pass occupies residues 597 to 617; the sequence is LNMFQTLKYLAILGSVTFLAG. Topologically, residues 618–631 are cytoplasmic; the sequence is NRMLAQQAVKRTAH.

Belongs to the SWP1 family. As to quaternary structure, component of the oligosaccharyltransferase (OST) complex. OST exists in two different complex forms which contain common core subunits RPN1, RPN2, OST48, OST4, DAD1 and TMEM258, either STT3A or STT3B as catalytic subunits, and form-specific accessory subunits. STT3A complex assembly occurs through the formation of 3 subcomplexes. Subcomplex 1 contains RPN1 and TMEM258, subcomplex 2 contains the STT3A-specific subunits STT3A, DC2/OSTC, and KCP2 as well as the core subunit OST4, and subcomplex 3 contains RPN2, DAD1, and OST48. The STT3A complex can form stable complexes with the Sec61 complex or with both the Sec61 and TRAP complexes. Interacts with DDI2. Interacts with TMEM35A/NACHO. In terms of tissue distribution, expressed in all tissues tested.

The protein localises to the endoplasmic reticulum. Its subcellular location is the endoplasmic reticulum membrane. The protein operates within protein modification; protein glycosylation. Its function is as follows. Subunit of the oligosaccharyl transferase (OST) complex that catalyzes the initial transfer of a defined glycan (Glc(3)Man(9)GlcNAc(2) in eukaryotes) from the lipid carrier dolichol-pyrophosphate to an asparagine residue within an Asn-X-Ser/Thr consensus motif in nascent polypeptide chains, the first step in protein N-glycosylation. N-glycosylation occurs cotranslationally and the complex associates with the Sec61 complex at the channel-forming translocon complex that mediates protein translocation across the endoplasmic reticulum (ER). All subunits are required for a maximal enzyme activity. This Homo sapiens (Human) protein is Dolichyl-diphosphooligosaccharide--protein glycosyltransferase subunit 2.